The chain runs to 122 residues: ATP synthase epsilon chain (122 aa).

Residues 97 to 112 show a composition bias toward basic and acidic residues; it reads EDLKSERELTRSRGDA. The segment at 97–122 is disordered; the sequence is EDLKSERELTRSRGDAALRATRRLNS.

The protein belongs to the ATPase epsilon chain family. In terms of assembly, F-type ATPases have 2 components, CF(1) - the catalytic core - and CF(0) - the membrane proton channel. CF(1) has five subunits: alpha(3), beta(3), gamma(1), delta(1), epsilon(1). CF(0) has three main subunits: a, b and c.

The protein resides in the cell membrane. Its function is as follows. Produces ATP from ADP in the presence of a proton gradient across the membrane. This is ATP synthase epsilon chain from Corynebacterium aurimucosum (strain ATCC 700975 / DSM 44827 / CIP 107346 / CN-1) (Corynebacterium nigricans).